Here is a 263-residue protein sequence, read N- to C-terminus: Acyl-[acyl-carrier-protein]--UDP-N-acetylglucosamine O-acyltransferase (263 aa).

Belongs to the transferase hexapeptide repeat family. LpxA subfamily. As to quaternary structure, homotrimer.

It is found in the cytoplasm. It carries out the reaction a (3R)-hydroxyacyl-[ACP] + UDP-N-acetyl-alpha-D-glucosamine = a UDP-3-O-[(3R)-3-hydroxyacyl]-N-acetyl-alpha-D-glucosamine + holo-[ACP]. Its pathway is glycolipid biosynthesis; lipid IV(A) biosynthesis; lipid IV(A) from (3R)-3-hydroxytetradecanoyl-[acyl-carrier-protein] and UDP-N-acetyl-alpha-D-glucosamine: step 1/6. Its function is as follows. Involved in the biosynthesis of lipid A, a phosphorylated glycolipid that anchors the lipopolysaccharide to the outer membrane of the cell. The chain is Acyl-[acyl-carrier-protein]--UDP-N-acetylglucosamine O-acyltransferase from Campylobacter jejuni (strain RM1221).